The primary structure comprises 291 residues: Phosphatidylglycerol--prolipoprotein diacylglyceryl transferase (291 aa).

The next 7 membrane-spanning stretches (helical) occupy residues 21-41, 60-80, 96-116, 124-144, 198-218, 225-245, and 258-278; these read IALHWYGFMYLVGFVFAMWLA, LLYAGFAGVFVGGRLGYVLFY, WDGGMSFHGGLVGVICAMWWF, FLQVADFIAPLVPFGLGMGRI, SQLYEMALEGIVLFIILNLYI, GSVSGLFLIGYGIFRVIVEFF, and ISMGQILSIPMILAGILMMIW. Arg-143 serves as a coordination point for a 1,2-diacyl-sn-glycero-3-phospho-(1'-sn-glycerol).

This sequence belongs to the Lgt family.

It is found in the cell inner membrane. It catalyses the reaction L-cysteinyl-[prolipoprotein] + a 1,2-diacyl-sn-glycero-3-phospho-(1'-sn-glycerol) = an S-1,2-diacyl-sn-glyceryl-L-cysteinyl-[prolipoprotein] + sn-glycerol 1-phosphate + H(+). It participates in protein modification; lipoprotein biosynthesis (diacylglyceryl transfer). Its function is as follows. Catalyzes the transfer of the diacylglyceryl group from phosphatidylglycerol to the sulfhydryl group of the N-terminal cysteine of a prolipoprotein, the first step in the formation of mature lipoproteins. The sequence is that of Phosphatidylglycerol--prolipoprotein diacylglyceryl transferase from Photorhabdus laumondii subsp. laumondii (strain DSM 15139 / CIP 105565 / TT01) (Photorhabdus luminescens subsp. laumondii).